The primary structure comprises 229 residues: Cytidylate kinase (229 aa).

10-18 (GFSSCGKST) contributes to the ATP binding site.

This sequence belongs to the cytidylate kinase family. Type 1 subfamily.

Its subcellular location is the cytoplasm. The enzyme catalyses CMP + ATP = CDP + ADP. The catalysed reaction is dCMP + ATP = dCDP + ADP. In Bacteroides fragilis (strain ATCC 25285 / DSM 2151 / CCUG 4856 / JCM 11019 / LMG 10263 / NCTC 9343 / Onslow / VPI 2553 / EN-2), this protein is Cytidylate kinase.